We begin with the raw amino-acid sequence, 508 residues long: MFS-type transporter penM (508 aa).

The interval 1–60 (MKDGEETPSVDGSTSASNREKLGTDLEIGPVDLSDGGKEEKVKDPNLVDWDGPDDPENPL) is disordered. The segment covering 35-46 (DGGKEEKVKDPN) has biased composition (basic and acidic residues). Asparagine 61 carries an N-linked (GlcNAc...) asparagine glycan. Residues 73 to 93 (SIALITFLTPLGSSMFAPGVG) form a helical membrane-spanning segment. N-linked (GlcNAc...) asparagine glycosylation occurs at asparagine 100. The next 6 membrane-spanning stretches (helical) occupy residues 108–128 (SFVVSVYLLGYCFGPLIIAPL), 143–163 (ILYVIWTIACAFAPEIGSLVV), 166–186 (FFAGLAGSCPLTIGAGSIADM), 197–217 (AAWALGPLIGPVVGPVAGAYL), 225–245 (WSFYVLAMAAGAITISSLFSI), and 299–319 (PIVFLLSLYVGVIYGYLYLLF). Positions 293–307 (KMLFRSPIVFLLSLY) match the Peroxisomal targeting signal motif. The N-linked (GlcNAc...) asparagine glycan is linked to asparagine 331. 5 helical membrane passes run 335 to 355 (GAVGLTYLGLGVGSLIGLFLI), 379 to 399 (LPPMVPGAIFVPISLFMYGWT), 407 to 427 (IVPIIGTSFLGTGMMITFMCV), 435 to 457 (FTNYAASVMAANTVFRSLAGALL), and 475 to 495 (SLLGFIALAFCALPVIFWIYG).

The protein belongs to the major facilitator superfamily.

The protein localises to the peroxisome membrane. Functionally, MFS-type transporter involved in penicillin production, most likely through the translocation of isopenicillin N from the cytosol to the peroxisomal lumen across the peroxisomal membrane. The chain is MFS-type transporter penM from Penicillium rubens (strain ATCC 28089 / DSM 1075 / NRRL 1951 / Wisconsin 54-1255) (Penicillium chrysogenum).